The sequence spans 357 residues: Protein RecA (357 aa).

An ATP-binding site is contributed by 74 to 81 (GPESSGKT).

The protein belongs to the RecA family.

It is found in the cytoplasm. Its function is as follows. Can catalyze the hydrolysis of ATP in the presence of single-stranded DNA, the ATP-dependent uptake of single-stranded DNA by duplex DNA, and the ATP-dependent hybridization of homologous single-stranded DNAs. It interacts with LexA causing its activation and leading to its autocatalytic cleavage. In Bordetella petrii (strain ATCC BAA-461 / DSM 12804 / CCUG 43448), this protein is Protein RecA.